A 290-amino-acid polypeptide reads, in one-letter code: Shikimate dehydrogenase (NADP(+)) (290 aa).

Shikimate is bound by residues 21-23 and Thr-68; that span reads SLS. Lys-72 serves as the catalytic Proton acceptor. An NADP(+)-binding site is contributed by Glu-84. Shikimate is bound by residues Asn-93 and Asp-108. NADP(+)-binding positions include 132–136 and Leu-230; that span reads GYGGA. Position 232 (Tyr-232) interacts with shikimate. Gly-253 lines the NADP(+) pocket.

Belongs to the shikimate dehydrogenase family. As to quaternary structure, homodimer.

The enzyme catalyses shikimate + NADP(+) = 3-dehydroshikimate + NADPH + H(+). It functions in the pathway metabolic intermediate biosynthesis; chorismate biosynthesis; chorismate from D-erythrose 4-phosphate and phosphoenolpyruvate: step 4/7. Functionally, involved in the biosynthesis of the chorismate, which leads to the biosynthesis of aromatic amino acids. Catalyzes the reversible NADPH linked reduction of 3-dehydroshikimate (DHSA) to yield shikimate (SA). This Synechocystis sp. (strain ATCC 27184 / PCC 6803 / Kazusa) protein is Shikimate dehydrogenase (NADP(+)).